The following is a 102-amino-acid chain: Protein V2 (102 aa).

Functionally, may be involved in the regulation of ssDNA versus dsDNA levels. This is Protein V2 from Beet curly top virus (strain California/Logan) (BCTV).